Here is a 1038-residue protein sequence, read N- to C-terminus: SEH-associated protein 4 (1038 aa).

A WD 1 repeat occupies 50-90 (KDFGSITCLDYSESEIGMIGVGEKNGYLRIFNISGQNSSSP). Serine 123 and serine 136 each carry phosphoserine. WD repeat units follow at residues 147–189 (KKQR…DSHE), 235–276 (QHPT…DQAS), and 544–587 (NTWR…SNQD).

Belongs to the WD repeat mio family. Component of the SEA complex composed of at least IML1/SEA1, RTC1/SEA2, MTC5/SEA3, NPR2, NPR3, SEA4, SEC13 and SEH1.

The protein localises to the cytoplasm. It localises to the vacuole membrane. Functionally, component of the SEA complex which coats the vacuolar membrane and is involved in intracellular trafficking, autophagy, response to nitrogen starvation, and amino acid biogenesis. This Saccharomyces cerevisiae (strain ATCC 204508 / S288c) (Baker's yeast) protein is SEH-associated protein 4 (SEA4).